The following is a 481-amino-acid chain: Small ribosomal subunit protein bS1 (481 aa).

S1 motif domains follow at residues 36 to 105 (GDIV…LSKK), 123 to 188 (DEAV…LSRR), 209 to 277 (GTIR…LSLK), and 294 to 363 (GQIV…LSLK). The segment at 429-467 (TAQMEKFAAAEAAGRGADDQSSASSAPSEKTAGGSLASD) is disordered. Low complexity predominate over residues 437–456 (AAEAAGRGADDQSSASSAPS).

This sequence belongs to the bacterial ribosomal protein bS1 family.

Functionally, binds mRNA; thus facilitating recognition of the initiation point. It is needed to translate mRNA with a short Shine-Dalgarno (SD) purine-rich sequence. This chain is Small ribosomal subunit protein bS1 (rpsA), found in Mycobacterium tuberculosis (strain CDC 1551 / Oshkosh).